The primary structure comprises 183 residues: dTTP/UTP pyrophosphatase (183 aa).

The active-site Proton acceptor is Asp64.

The protein belongs to the Maf family. YhdE subfamily. It depends on a divalent metal cation as a cofactor.

It is found in the cytoplasm. It catalyses the reaction dTTP + H2O = dTMP + diphosphate + H(+). The catalysed reaction is UTP + H2O = UMP + diphosphate + H(+). In terms of biological role, nucleoside triphosphate pyrophosphatase that hydrolyzes dTTP and UTP. May have a dual role in cell division arrest and in preventing the incorporation of modified nucleotides into cellular nucleic acids. The chain is dTTP/UTP pyrophosphatase from Acinetobacter baylyi (strain ATCC 33305 / BD413 / ADP1).